The following is a 482-amino-acid chain: uncharacterized protein (482 aa).

Positions 231 to 459 (FEGNAGFYEI…FDACNHYLID (229 aa)) constitute an AB hydrolase-1 domain.

This is an uncharacterized protein from Caenorhabditis elegans.